Here is a 65-residue protein sequence, read N- to C-terminus: MPKMKTNRSAAKRFGKTGSGKFTRRRQNLRHILTKKSAKRTRRLGQGALVDSANVKAVSRLLPYA.

Residues 1-28 are disordered; it reads MPKMKTNRSAAKRFGKTGSGKFTRRRQN.

It belongs to the bacterial ribosomal protein bL35 family.

This is Large ribosomal subunit protein bL35 from Solidesulfovibrio magneticus (strain ATCC 700980 / DSM 13731 / RS-1) (Desulfovibrio magneticus).